The chain runs to 140 residues: Small ribosomal subunit protein bS16 (140 aa).

The segment at 86 to 140 (TVGKAKQAAKREEEAKQAAKEAAEAKAAAEAEAAAAAEAAKAEDAPDGETESSEG) is disordered. Basic and acidic residues predominate over residues 94 to 114 (AKREEEAKQAAKEAAEAKAAA). The span at 115 to 124 (EAEAAAAAEA) shows a compositional bias: low complexity. Acidic residues predominate over residues 130-140 (APDGETESSEG).

This sequence belongs to the bacterial ribosomal protein bS16 family.

The protein is Small ribosomal subunit protein bS16 of Parasynechococcus marenigrum (strain WH8102).